Reading from the N-terminus, the 224-residue chain is Phosphoribosylformylglycinamidine synthase subunit PurQ (224 aa).

Positions 4–224 (FGIIVFPGSN…ATDGLAMFIS (221 aa)) constitute a Glutamine amidotransferase type-1 domain. The active-site Nucleophile is the Cys-87. Active-site residues include His-204 and Glu-206.

As to quaternary structure, part of the FGAM synthase complex composed of 1 PurL, 1 PurQ and 2 PurS subunits.

It localises to the cytoplasm. The enzyme catalyses N(2)-formyl-N(1)-(5-phospho-beta-D-ribosyl)glycinamide + L-glutamine + ATP + H2O = 2-formamido-N(1)-(5-O-phospho-beta-D-ribosyl)acetamidine + L-glutamate + ADP + phosphate + H(+). The catalysed reaction is L-glutamine + H2O = L-glutamate + NH4(+). It participates in purine metabolism; IMP biosynthesis via de novo pathway; 5-amino-1-(5-phospho-D-ribosyl)imidazole from N(2)-formyl-N(1)-(5-phospho-D-ribosyl)glycinamide: step 1/2. In terms of biological role, part of the phosphoribosylformylglycinamidine synthase complex involved in the purines biosynthetic pathway. Catalyzes the ATP-dependent conversion of formylglycinamide ribonucleotide (FGAR) and glutamine to yield formylglycinamidine ribonucleotide (FGAM) and glutamate. The FGAM synthase complex is composed of three subunits. PurQ produces an ammonia molecule by converting glutamine to glutamate. PurL transfers the ammonia molecule to FGAR to form FGAM in an ATP-dependent manner. PurS interacts with PurQ and PurL and is thought to assist in the transfer of the ammonia molecule from PurQ to PurL. This chain is Phosphoribosylformylglycinamidine synthase subunit PurQ, found in Synechocystis sp. (strain ATCC 27184 / PCC 6803 / Kazusa).